The sequence spans 268 residues: L-cystine-binding protein TcyA (268 aa).

The signal sequence occupies residues 1 to 19 (MKKALLALFMVVSIAALAA). Cysteine 20 is lipidated: N-palmitoyl cysteine. A lipid anchor (S-diacylglycerol cysteine) is attached at cysteine 20.

This sequence belongs to the bacterial solute-binding protein 3 family. As to quaternary structure, the complex is composed of two ATP-binding proteins (TcyC), two transmembrane proteins (TcyB) and a solute-binding protein (TcyA).

The protein localises to the cell membrane. In terms of biological role, part of the ABC transporter complex TcyABC involved in L-cystine import. The polypeptide is L-cystine-binding protein TcyA (tcyA) (Bacillus subtilis (strain 168)).